An 860-amino-acid polypeptide reads, in one-letter code: Nucleolar MIF4G domain-containing protein 1 (860 aa).

Disordered regions lie at residues Met-1–Lys-172, Arg-191–Phe-211, and Gly-226–Ile-339. The interval Met-1–Lys-269 is necessary for nucleolar localization and for targeting PPP1CA to the nucleolus. Over residues Val-20 to Arg-31 the composition is skewed to basic residues. Ser-57 is modified (phosphoserine). A compositionally biased stretch (basic residues) spans Gly-77–Gln-99. A compositionally biased stretch (basic and acidic residues) spans Gly-115 to Arg-131. Ser-139 bears the Phosphoserine mark. The span at Arg-142–Ala-151 shows a compositional bias: basic residues. Positions Lys-152–Ala-169 are enriched in low complexity. 2 stretches are compositionally biased toward acidic residues: residues Ser-249–Val-267 and Ala-278–Glu-293. Positions Arg-307–Phe-310 match the Required for efficient binding to PPP1CA and for targeting PPP1CA to the nucleolus motif. Over residues Glu-312–Asp-325 the composition is skewed to acidic residues. Phosphoserine is present on residues Ser-317, Ser-320, and Ser-321. Residues Lys-362 to Asp-559 enclose the MIF4G domain. One can recognise an MI domain in the interval Asp-654 to Phe-770.

The protein belongs to the CWC22 family. In terms of assembly, may interact with EIF4A1, EIF4A2 and EIF4A3. Interacts with PPP1CA and PPP1CC. Expressed in heart and skeletal muscle.

It is found in the nucleus. The protein localises to the nucleolus. Functionally, plays a role in targeting PPP1CA to the nucleolus. The protein is Nucleolar MIF4G domain-containing protein 1 (NOM1) of Homo sapiens (Human).